We begin with the raw amino-acid sequence, 120 residues long: MPNPVTMLYGRKADLVILPHVLAEERPHPYSTPGRKRGAQIALTTGIDALASFAPQIVNPRHGLSRVVQCLGGCENKRHAYFRSISKTPHIRARGVPSVCAVRTVGVDGAKRPPKPIPVQ.

This is an uncharacterized protein from Mycobacterium tuberculosis (strain CDC 1551 / Oshkosh).